The sequence spans 266 residues: Syntaxin-71 (266 aa).

At 1 to 243 the chain is on the cytoplasmic side; the sequence is MTVIDILTRV…TVNQLRSSRN (243 aa). The residue at position 12 (Ser12) is a Phosphoserine. The stretch at 44 to 87 forms a coiled coil; sequence ETQIETALEKAELVTKEKNRAAAVAMNAEIRRTKARLSEEVPKL. Residues 122 to 146 are disordered; sequence DGTAGGPKSTSAWTPSSTTSRPDIK. A compositionally biased stretch (low complexity) spans 130–141; that stretch reads STSAWTPSSTTS. One can recognise a t-SNARE coiled-coil homology domain in the interval 172–234; it reads EMRKIKQEQG…KNTNVRLKDT (63 aa). Residues 244–264 traverse the membrane as a helical; Anchor for type IV membrane protein segment; that stretch reads FCIDIVLLCIVLGIAAYLYNV. Over 265-266 the chain is Vesicular; that stretch reads LK.

The protein belongs to the syntaxin family. In terms of assembly, part of the t-SNARE complex. In terms of tissue distribution, expressed in root, leaf, stem, flower and silique.

It is found in the membrane. Vesicle trafficking protein that functions in the secretory pathway. This Arabidopsis thaliana (Mouse-ear cress) protein is Syntaxin-71 (SYP71).